A 323-amino-acid chain; its full sequence is Elongation factor P--(R)-beta-lysine ligase (323 aa).

Residue 76-78 (SPE) coordinates substrate. Residues 100–102 (RNE) and N109 contribute to the ATP site. Position 118 (Y118) interacts with substrate. ATP is bound at residue 242-243 (EL). A substrate-binding site is contributed by E249. Residue G298 coordinates ATP.

Belongs to the class-II aminoacyl-tRNA synthetase family. EpmA subfamily. As to quaternary structure, homodimer.

The enzyme catalyses D-beta-lysine + L-lysyl-[protein] + ATP = N(6)-((3R)-3,6-diaminohexanoyl)-L-lysyl-[protein] + AMP + diphosphate + H(+). Its function is as follows. With EpmB is involved in the beta-lysylation step of the post-translational modification of translation elongation factor P (EF-P). Catalyzes the ATP-dependent activation of (R)-beta-lysine produced by EpmB, forming a lysyl-adenylate, from which the beta-lysyl moiety is then transferred to the epsilon-amino group of a conserved specific lysine residue in EF-P. This chain is Elongation factor P--(R)-beta-lysine ligase, found in Histophilus somni (strain 129Pt) (Haemophilus somnus).